Consider the following 602-residue polypeptide: UvrABC system protein C (602 aa).

Residues 15–100 (DQSGVYHYFD…IKQLKPKYNI (86 aa)) enclose the GIY-YIG domain. The 36-residue stretch at 206 to 241 (SKLISRLKERMEKLAENLRFEEAGELRDRIEKIKRI) folds into the UVR domain.

It belongs to the UvrC family. In terms of assembly, interacts with UvrB in an incision complex.

The protein localises to the cytoplasm. In terms of biological role, the UvrABC repair system catalyzes the recognition and processing of DNA lesions. UvrC both incises the 5' and 3' sides of the lesion. The N-terminal half is responsible for the 3' incision and the C-terminal half is responsible for the 5' incision. The polypeptide is UvrABC system protein C (Wolinella succinogenes (strain ATCC 29543 / DSM 1740 / CCUG 13145 / JCM 31913 / LMG 7466 / NCTC 11488 / FDC 602W) (Vibrio succinogenes)).